Consider the following 189-residue polypeptide: Large ribosomal subunit protein uL6 (189 aa).

The protein belongs to the universal ribosomal protein uL6 family. As to quaternary structure, part of the 50S ribosomal subunit.

Its function is as follows. This protein binds to the 23S rRNA, and is important in its secondary structure. It is located near the subunit interface in the base of the L7/L12 stalk, and near the tRNA binding site of the peptidyltransferase center. This chain is Large ribosomal subunit protein uL6, found in Bacteroides fragilis (strain ATCC 25285 / DSM 2151 / CCUG 4856 / JCM 11019 / LMG 10263 / NCTC 9343 / Onslow / VPI 2553 / EN-2).